We begin with the raw amino-acid sequence, 632 residues long: Serine/threonine-protein kinase plk-2 (632 aa).

The disordered stretch occupies residues 1–26; that stretch reads MQRVQPSAARVKSQKKEKAPPDVPDV. One can recognise a Protein kinase domain in the interval 36-287; sequence YEKGKFLGKG…ARAVCRDHFF (252 aa). ATP is bound by residues 42 to 50 and K65; that span reads LGKGGFAHC. Residue D159 is the Proton acceptor of the active site. The interval 313–334 is disordered; that stretch reads AEENVSPSGTIDQRGPHQAGRS. POLO box domains lie at 405 to 484 and 506 to 588; these read WISK…YMND and TLRV…RLVE.

The protein belongs to the protein kinase superfamily. Ser/Thr protein kinase family. CDC5/Polo subfamily. As to quaternary structure, interacts (via POLO box domain) with mex-5 and mex-6. Interacts (via POLO box domain) with him-8 (via N-terminus); the interaction mediates plk-2 recruitment to the pairing region of X chromosomes during meiosis. Interacts with sun-1. May interact with nicotinic acetylcholine receptor. Mg(2+) is required as a cofactor. As to expression, expressed in oocytes.

The protein localises to the nucleus. The protein resides in the cytoplasm. Its subcellular location is the cytoskeleton. It localises to the microtubule organizing center. It is found in the centrosome. The protein localises to the chromosome. The protein resides in the centromere. Its subcellular location is the kinetochore. The enzyme catalyses L-seryl-[protein] + ATP = O-phospho-L-seryl-[protein] + ADP + H(+). It carries out the reaction L-threonyl-[protein] + ATP = O-phospho-L-threonyl-[protein] + ADP + H(+). Serine/threonine-protein kinase which plays a role, during oogenesis, in chromosome pairing and synapsis, by facilitating the recruitment and attachment of meiotic chromosomes to the nuclear envelope during prophase. Promotes the localization of brc-1 to the short arm of homologous chromosomes during meiotic prophase I. Regulates the formation of sun-1 patches along the nuclear envelope. Promotes meiotic nuclei apoptosis in response to chromosomal asynapsis. Plays a redundant role with plk-1 in the establishment of cell polarity downstream of mex-5 and mex-6 during the first embryonic cell divisions. Plays a role in nicotinic acetylcholine receptor-mediated sensitivity to nicotine but not levamisole. Regulates motility. This chain is Serine/threonine-protein kinase plk-2, found in Caenorhabditis elegans.